We begin with the raw amino-acid sequence, 287 residues long: MSTINLPLNLTVRVHPVVLFQIVDAYERRNADSERVIGTLLGSVEKGIVEVTNCFCVPHKEHADQVEAELGYASDLYDLNRRVNPSENIVGWWATGQEVTNHSSVIHEYYARECNNPIHLTLDTSLTAARMGIKAYVCVSLGVPGGKTGCMFTPINVEVTSYEPEVVGLSLCAKTIGVQSNPARPRTVSPMLDLAQVSEASGKLQTLLGEVLNYVEDVLAEKQQPDNFVGRALLDLIHSVPNMKHEEFAKMFNSNVKDLLMVVTLSQLIKTQLQLNEKLTSLTSFLS.

The MPN domain occupies 12 to 142 (VRVHPVVLFQ…IKAYVCVSLG (131 aa)).

Belongs to the eIF-3 subunit F family. As to quaternary structure, component of the eukaryotic translation initiation factor 3 (eIF-3) complex.

The protein localises to the cytoplasm. Functionally, component of the eukaryotic translation initiation factor 3 (eIF-3) complex, which is involved in protein synthesis of a specialized repertoire of mRNAs and, together with other initiation factors, stimulates binding of mRNA and methionyl-tRNAi to the 40S ribosome. The eIF-3 complex specifically targets and initiates translation of a subset of mRNAs involved in cell proliferation. The polypeptide is Eukaryotic translation initiation factor 3 subunit F (Culex quinquefasciatus (Southern house mosquito)).